A 309-amino-acid chain; its full sequence is Mitochondrial succinate-fumarate transporter 1 (309 aa).

Solcar repeat units lie at residues 11 to 96 (IPPY…FQTA), 108 to 196 (RGRF…FDIL), and 208 to 298 (LQPW…VTGL). A run of 6 helical transmembrane segments spans residues 17–37 (AVSG…IDVI), 65–85 (VRAL…KYTL), 111–131 (FLSG…PFEV), 171–191 (GAAP…TAKN), 214–234 (MISG…FDVV), and 273–293 (GLLP…AVAD).

Belongs to the mitochondrial carrier (TC 2.A.29) family. As to expression, expressed in root tips, cotyledons, hypocotyls, leaves, trichomes, stems, flowers, carpels, anthers, pollen and abscission zone of siliques.

Its subcellular location is the mitochondrion inner membrane. May transport cytoplasmic succinate, derived from fatty acid oxidation, into the mitochondrial matrix in exchange of fumarate during lipid mobilization in seed germination. Conversion of seed-reserved triacylglycerols into sucrose is necessary for growth before the onset of photosynthesis and involves fatty acid beta-oxidation, the glyoxylate cycle and gluconeogenesis. This is Mitochondrial succinate-fumarate transporter 1 (SFC1) from Arabidopsis thaliana (Mouse-ear cress).